The following is a 239-amino-acid chain: Purine nucleoside phosphorylase DeoD-type (239 aa).

Residue histidine 5 coordinates a purine D-ribonucleoside. Phosphate contacts are provided by residues glycine 21, arginine 25, arginine 44, and 88–91; that span reads RVGS. A purine D-ribonucleoside is bound by residues 180–182 and 204–205; these read EME and SD. Aspartate 205 (proton donor) is an active-site residue.

Belongs to the PNP/UDP phosphorylase family. In terms of assembly, homohexamer; trimer of homodimers.

The catalysed reaction is a purine D-ribonucleoside + phosphate = a purine nucleobase + alpha-D-ribose 1-phosphate. It catalyses the reaction a purine 2'-deoxy-D-ribonucleoside + phosphate = a purine nucleobase + 2-deoxy-alpha-D-ribose 1-phosphate. In terms of biological role, catalyzes the reversible phosphorolytic breakdown of the N-glycosidic bond in the beta-(deoxy)ribonucleoside molecules, with the formation of the corresponding free purine bases and pentose-1-phosphate. This Cronobacter sakazakii (strain ATCC BAA-894) (Enterobacter sakazakii) protein is Purine nucleoside phosphorylase DeoD-type.